A 91-amino-acid polypeptide reads, in one-letter code: Small ribosomal subunit protein uS19 (91 aa).

It belongs to the universal ribosomal protein uS19 family.

In terms of biological role, protein S19 forms a complex with S13 that binds strongly to the 16S ribosomal RNA. In Acinetobacter baumannii (strain AB307-0294), this protein is Small ribosomal subunit protein uS19.